The primary structure comprises 330 residues: Phosphate acyltransferase (330 aa).

It belongs to the PlsX family. In terms of assembly, homodimer. Probably interacts with PlsY.

Its subcellular location is the cytoplasm. The enzyme catalyses a fatty acyl-[ACP] + phosphate = an acyl phosphate + holo-[ACP]. It functions in the pathway lipid metabolism; phospholipid metabolism. In terms of biological role, catalyzes the reversible formation of acyl-phosphate (acyl-PO(4)) from acyl-[acyl-carrier-protein] (acyl-ACP). This enzyme utilizes acyl-ACP as fatty acyl donor, but not acyl-CoA. The protein is Phosphate acyltransferase of Bacillus cereus (strain B4264).